The sequence spans 208 residues: 3-demethoxyubiquinol 3-hydroxylase (208 aa).

Fe cation is bound by residues glutamate 57, glutamate 87, histidine 90, glutamate 139, glutamate 171, and histidine 174.

The protein belongs to the COQ7 family. It depends on Fe cation as a cofactor.

It localises to the cell membrane. The enzyme catalyses a 5-methoxy-2-methyl-3-(all-trans-polyprenyl)benzene-1,4-diol + AH2 + O2 = a 3-demethylubiquinol + A + H2O. The protein operates within cofactor biosynthesis; ubiquinone biosynthesis. Catalyzes the hydroxylation of 2-nonaprenyl-3-methyl-6-methoxy-1,4-benzoquinol during ubiquinone biosynthesis. This Herbaspirillum seropedicae protein is 3-demethoxyubiquinol 3-hydroxylase.